The primary structure comprises 75 residues: MNPLEMQRKGPPRRWCLQVYPTAPKRQRPSRTGHDDDGGFVEKKRGKCGEKQERSDCYCVCVERSRHGRLHFVMC.

The disordered stretch occupies residues 24–43 (PKRQRPSRTGHDDDGGFVEK). Over residues 32 to 43 (TGHDDDGGFVEK) the composition is skewed to basic and acidic residues.

It localises to the nucleus. Functionally, may possess a function in tumorigenesis. This is Endogenous retrovirus group K member 7 Np9 protein (ERVK-7) from Homo sapiens (Human).